Reading from the N-terminus, the 356-residue chain is MNLSIKENKETVRPVFPFTAIVGQEEMKLALMLNVIDPKIGGVMIMGDRGTGKSTTIRAIADLLPKIEIVKDDLFNSHPSDVDLMSDENKHALQNGINIDKAYIKVPMVDLPLGATEDRVCGTIDIEKALTEGVKTFEPGLLAKANRGILYVDEVNLLDDHLVDILLDSAASGWNTVEREGISVRHPARFVLVGSGNPEEGELRPQLLDRFGMHAEIRTVKDPELRVQIVEQRTNFDQDPKKCIENCAKDQIKLKQQIADAQLLLSTITIDYDLRVKISQVCGELDVDGLRGDIVTNRAAKAYAAFNGQQTVNSSDISKVITLCLRHRLRKDPLESMDSGEKVEKVFNKVFNLEEI.

47-54 is an ATP binding site; the sequence is GDRGTGKS.

Belongs to the Mg-chelatase subunits D/I family.

It localises to the plastid. It is found in the chloroplast. The enzyme catalyses protoporphyrin IX + Mg(2+) + ATP + H2O = Mg-protoporphyrin IX + ADP + phosphate + 3 H(+). The protein operates within porphyrin-containing compound metabolism; chlorophyll biosynthesis. Involved in chlorophyll biosynthesis; introduces a magnesium ion into protoporphyrin IX to yield Mg-protoporphyrin IX. The sequence is that of Magnesium-chelatase subunit ChlI (chlI) from Porphyra purpurea (Red seaweed).